We begin with the raw amino-acid sequence, 514 residues long: Alanine--glyoxylate aminotransferase 2, mitochondrial (514 aa).

The N-terminal 41 residues, 1 to 41 (MTLIWRHLLRPLCLVTPAPRILEMRPFLNLGASWTSVTKLS), are a transit peptide targeting the mitochondrion. K71 is modified (N6-acetyllysine; alternate). Residue K71 is modified to N6-succinyllysine; alternate. K84 bears the N6-acetyllysine mark. N6-acetyllysine; alternate is present on K262. At K262 the chain carries N6-succinyllysine; alternate. K304 carries the post-translational modification N6-succinyllysine. An N6-(pyridoxal phosphate)lysine modification is found at K350. Residue K420 is modified to N6-acetyllysine; alternate. K420 carries the post-translational modification N6-succinyllysine; alternate.

It belongs to the class-III pyridoxal-phosphate-dependent aminotransferase family. Homotetramer. Pyridoxal 5'-phosphate is required as a cofactor.

The protein localises to the mitochondrion. The catalysed reaction is glyoxylate + L-alanine = glycine + pyruvate. The enzyme catalyses (R)-3-amino-2-methylpropanoate + pyruvate = 2-methyl-3-oxopropanoate + L-alanine. It carries out the reaction 3-oxopropanoate + L-alanine = beta-alanine + pyruvate. It catalyses the reaction 2-oxobutanoate + L-alanine = (2S)-2-aminobutanoate + pyruvate. The catalysed reaction is N(omega),N(omega)-dimethyl-L-arginine + pyruvate = 5-(3,3-dimethylguanidino)-2-oxopentanoate + L-alanine. The enzyme catalyses N(omega),N('omega)-dimethyl-L-arginine + pyruvate = 5-(3,3'-dimethylguanidino)-2-oxopentanoate + L-alanine. It carries out the reaction N(omega),N(omega)-dimethyl-L-arginine + glyoxylate = 5-(3,3-dimethylguanidino)-2-oxopentanoate + glycine. It catalyses the reaction N(omega),N('omega)-dimethyl-L-arginine + glyoxylate = 5-(3,3'-dimethylguanidino)-2-oxopentanoate + glycine. The catalysed reaction is N(omega)-methyl-L-arginine + pyruvate = 5-(3-methylguanidino)-2-oxopentanoate + L-alanine. The enzyme catalyses N(omega)-methyl-L-arginine + glyoxylate = 5-(3-methylguanidino)-2-oxopentanoate + glycine. It carries out the reaction L-ornithine + pyruvate = 5-amino-2-oxopentanoate + L-alanine. It catalyses the reaction L-ornithine + glyoxylate = 5-amino-2-oxopentanoate + glycine. The catalysed reaction is (2S)-2-aminobutanoate + glyoxylate = 2-oxobutanoate + glycine. The enzyme catalyses N(omega),N(omega)-dimethyl-L-arginine + oxaloacetate = 5-(3,3-dimethylguanidino)-2-oxopentanoate + L-aspartate. It carries out the reaction oxaloacetate + L-alanine = L-aspartate + pyruvate. It catalyses the reaction N(omega),N(omega)-dimethyl-L-arginine + 2-oxobutanoate = 5-(3,3-dimethylguanidino)-2-oxopentanoate + (2S)-2-aminobutanoate. The catalysed reaction is 2-oxopentanoate + N(omega),N(omega)-dimethyl-L-arginine = 5-(3,3-dimethylguanidino)-2-oxopentanoate + L-2-aminopentanoate. The enzyme catalyses 2-oxohexanoate + N(omega),N(omega)-dimethyl-L-arginine = L-2-aminohexanoate + 5-(3,3-dimethylguanidino)-2-oxopentanoate. Its function is as follows. Multifunctional aminotransferase with a broad substrate specificity. Catalyzes the conversion of glyoxylate to glycine using alanine as the amino donor. Catalyzes metabolism of not L- but the D-isomer of D-beta-aminoisobutyric acid to generate 2-methyl-3-oxopropanoate and alanine. Catalyzes the transfer of the amino group from beta-alanine to pyruvate to yield L-alanine and 3-oxopropanoate. Can metabolize NG-monomethyl-L-arginine (NMMA), asymmetric NG,NG-dimethyl-L-arginine (ADMA) and symmetric NG,N'G-dimethyl-L-arginine (SDMA). ADMA is a potent inhibitor of nitric-oxide (NO) synthase, and this activity provides mechanism through which the kidney regulates blood pressure. The chain is Alanine--glyoxylate aminotransferase 2, mitochondrial (AGXT2) from Pongo abelii (Sumatran orangutan).